The primary structure comprises 394 residues: Shematrin-like protein 2 (394 aa).

Positions Met1 to Ala19 are cleaved as a signal peptide.

As to expression, prismatic layer of shell (at protein level). Expressed primarily in the mantle with highest level in the mantle edge and lower level in the mantle pallium.

Its subcellular location is the secreted. The polypeptide is Shematrin-like protein 2 (Pinctada maxima (Silver-lipped pearl oyster)).